The following is a 274-amino-acid chain: tRNA dimethylallyltransferase (274 aa).

The interaction with substrate tRNA stretch occupies residues 9–12 (DSLS).

This sequence belongs to the IPP transferase family. Monomer. Requires Mg(2+) as cofactor.

It carries out the reaction adenosine(37) in tRNA + dimethylallyl diphosphate = N(6)-dimethylallyladenosine(37) in tRNA + diphosphate. Catalyzes the transfer of a dimethylallyl group onto the adenine at position 37 in tRNAs that read codons beginning with uridine, leading to the formation of N6-(dimethylallyl)adenosine (i(6)A). This Helicobacter pylori (strain P12) protein is tRNA dimethylallyltransferase (miaA).